A 150-amino-acid chain; its full sequence is Ribonuclease K6 (150 aa).

Positions 1–23 (MVLCFPLLLLLLVLWGPVCPLHA) are cleaved as a signal peptide. The active-site Proton acceptor is the His38. 4 disulfide bridges follow: Cys46/Cys104, Cys60/Cys114, Cys78/Cys129, and Cys85/Cys92. Asn55 carries an N-linked (GlcNAc...) asparagine glycan. Substrate-binding positions include 61–65 (KHQNT) and Lys86. Asn100 is a glycosylation site (N-linked (GlcNAc...) asparagine). Arg105 serves as a coordination point for substrate. His145 functions as the Proton donor in the catalytic mechanism.

It belongs to the pancreatic ribonuclease family. As to quaternary structure, interacts (via N-terminus) with bacterial lipopolysaccharide (LPS).

It localises to the secreted. It is found in the lysosome. The protein localises to the cytoplasmic granule. Ribonuclease which shows a preference for the pyrimidines uridine and cytosine. Has potent antibacterial activity against a range of Gram-positive and Gram-negative bacteria, including P.aeruginosa, A.baumanii, M.luteus, S.aureus, E.faecalis, E.faecium, S.saprophyticus and E.coli. Causes loss of bacterial membrane integrity, and also promotes agglutination of Gram-negative bacteria. Probably contributes to urinary tract sterility. Bactericidal activity is independent of RNase activity. The sequence is that of Ribonuclease K6 (RNASE6) from Gorilla gorilla gorilla (Western lowland gorilla).